Reading from the N-terminus, the 255-residue chain is Ditrans,polycis-undecaprenyl-diphosphate synthase ((2E,6E)-farnesyl-diphosphate specific) (255 aa).

Asp-21 is a catalytic residue. Asp-21 is a Mg(2+) binding site. Substrate-binding positions include 22 to 25 (GNGR), Trp-26, Arg-34, His-38, and 66 to 68 (SSE). Asn-69 functions as the Proton acceptor in the catalytic mechanism. Substrate contacts are provided by residues Trp-70, Arg-72, Arg-189, and 195 to 197 (RIS). Residue Glu-208 participates in Mg(2+) binding.

The protein belongs to the UPP synthase family. As to quaternary structure, homodimer. Requires Mg(2+) as cofactor.

It carries out the reaction 8 isopentenyl diphosphate + (2E,6E)-farnesyl diphosphate = di-trans,octa-cis-undecaprenyl diphosphate + 8 diphosphate. Catalyzes the sequential condensation of isopentenyl diphosphate (IPP) with (2E,6E)-farnesyl diphosphate (E,E-FPP) to yield (2Z,6Z,10Z,14Z,18Z,22Z,26Z,30Z,34E,38E)-undecaprenyl diphosphate (di-trans,octa-cis-UPP). UPP is the precursor of glycosyl carrier lipid in the biosynthesis of bacterial cell wall polysaccharide components such as peptidoglycan and lipopolysaccharide. The sequence is that of Ditrans,polycis-undecaprenyl-diphosphate synthase ((2E,6E)-farnesyl-diphosphate specific) from Xylella fastidiosa (strain 9a5c).